We begin with the raw amino-acid sequence, 284 residues long: Protein-S-isoprenylcysteine O-methyltransferase (284 aa).

Residues 1 to 16 (MAGCAARAPPGSEARL) lie on the Cytoplasmic side of the membrane. Residues 17–33 (SLATFLLGASVLALPLL) traverse the membrane as a helical segment. Residues 34 to 41 (TRAGLQGR) lie on the Lumenal side of the membrane. A helical transmembrane segment spans residues 42–59 (TGLALYVAGLNALLLLLY). At 60-69 (RPPRYQIAIR) the chain is on the cytoplasmic side. The helical transmembrane segment at 70–87 (ACFLGFVFGCGTLLSFSQ) threads the bilayer. Over 88-92 (SSWSH) the chain is Lumenal. A helical transmembrane segment spans residues 93-112 (FGWYMCSLSLFHYSEYLVTA). The Cytoplasmic segment spans residues 113–131 (VNNPKSLSLDSFLLNHSLE). A helical transmembrane segment spans residues 132 to 149 (YTVAALSSWLEFTLENIF). Residues 150–154 (WPELK) lie on the Lumenal side of the membrane. Residues 155–174 (QITWLSVTGLLMVVFGECLR) traverse the membrane as a helical segment. The Cytoplasmic segment spans residues 175 to 212 (KAAMFTAGSNFNHVVQNEKSDTHTLVTSGVYAWFRHPS). S-adenosyl-L-methionine contacts are provided by residues Gln190, 197–200 (HTLV), Tyr205, and 210–213 (HPSY). Residues 213-228 (YVGWFYWSIGTQVMLC) form a helical membrane-spanning segment. Residue Asn229 is a topological domain, lumenal. Residues 230–244 (PICGVSYALTVWRFF) traverse the membrane as a helical segment. Topologically, residues 245-284 (RDRTEEEEISLIHFFGEEYLEYKKRVPTGLPFIKGVKVDL) are cytoplasmic. Arg247 serves as a coordination point for substrate. Position 251 (Glu251) interacts with S-adenosyl-L-methionine.

This sequence belongs to the class VI-like SAM-binding methyltransferase superfamily. Isoprenylcysteine carboxyl methyltransferase family. Ubiquitously expressed. Expressed at higher levels in the cerebellum and putamen than in other brain regions. Abundant expression seen in the Purkinje cells and pontine neurons.

It localises to the endoplasmic reticulum membrane. It carries out the reaction [protein]-C-terminal S-[(2E,6E)-farnesyl]-L-cysteine + S-adenosyl-L-methionine = [protein]-C-terminal S-[(2E,6E)-farnesyl]-L-cysteine methyl ester + S-adenosyl-L-homocysteine. With respect to regulation, competitively inhibited by N-acetyl-S-trans,trans-farnesyl-l-cysteine (AFC). Functionally, catalyzes the post-translational methylation of isoprenylated C-terminal cysteine residues. The chain is Protein-S-isoprenylcysteine O-methyltransferase (ICMT) from Homo sapiens (Human).